The following is a 544-amino-acid chain: Light-independent protochlorophyllide reductase subunit B (544 aa).

A [4Fe-4S] cluster-binding site is contributed by aspartate 36. Residue aspartate 286 is the Proton donor of the active site. Position 421 to 422 (421 to 422) interacts with substrate; the sequence is GM.

This sequence belongs to the ChlB/BchB/BchZ family. In terms of assembly, protochlorophyllide reductase is composed of three subunits; BchL, BchN and BchB. Forms a heterotetramer of two BchB and two BchN subunits. It depends on [4Fe-4S] cluster as a cofactor.

It catalyses the reaction chlorophyllide a + oxidized 2[4Fe-4S]-[ferredoxin] + 2 ADP + 2 phosphate = protochlorophyllide a + reduced 2[4Fe-4S]-[ferredoxin] + 2 ATP + 2 H2O. Its pathway is porphyrin-containing compound metabolism; bacteriochlorophyll biosynthesis (light-independent). Its function is as follows. Component of the dark-operative protochlorophyllide reductase (DPOR) that uses Mg-ATP and reduced ferredoxin to reduce ring D of protochlorophyllide (Pchlide) to form chlorophyllide a (Chlide). This reaction is light-independent. The NB-protein (BchN-BchB) is the catalytic component of the complex. This chain is Light-independent protochlorophyllide reductase subunit B, found in Chloroflexus aggregans (strain MD-66 / DSM 9485).